We begin with the raw amino-acid sequence, 532 residues long: MAKFVFVTGGVVSGLGKGITASSLGNLLKASGLKVFMQKFDPYLNVDPGTMSPYQHGEVFVTDDGGETDLDLGHYERFIDEKLTKMSSTSAGKIYLETINAERRGDWGGQTIQVVPHITDSIKNKVYQAAKTSGADVIISEIGGTVGDIESQPFIEAIRQIRMEQGKENVVFIHVALLLYLNASKEYKTKPIQMSVKELLSLGIQPDIIVQRTDKHSSKEIKEKISLFCNIPTSNVIDAIDKESIYEVPLEMYEQNLHGLVLDQLQIRTKKTDMESWIKFCEKIKASKEEFEVTFVGKYIELQDAYLSVIESLKIAGYEFKRKLKINWIQADKLNESNYKEVLQNAKGILVPGGFGDRGIEGMILASKFARENSIPYLGICLGMQIATISIARDWLNLPEANSTEFDHSGAVPIFDFIRGIDVQNLGGTLRLGAFYKTTIKEGTKAEKLYGSREVFERHRHRYEFNNEYKKALEEKGLVFSGIYEEKKLVEIIELPNHPFFVGSQYHPEFTSRPNKPNPLFKGFVEAIVNNK.

Residues 1–267 (MAKFVFVTGG…HGLVLDQLQI (267 aa)) are amidoligase domain. Position 13 (Ser-13) interacts with CTP. Ser-13 is a UTP binding site. 14–19 (GLGKGI) provides a ligand contact to ATP. L-glutamine is bound at residue Tyr-54. Asp-71 contributes to the ATP binding site. Asp-71 and Glu-141 together coordinate Mg(2+). CTP contacts are provided by residues 148-150 (DIE), 188-193 (KTKPIQ), and Lys-224. UTP contacts are provided by residues 188-193 (KTKPIQ) and Lys-224. Residues 292-532 (EVTFVGKYIE…GFVEAIVNNK (241 aa)) form the Glutamine amidotransferase type-1 domain. Gly-354 provides a ligand contact to L-glutamine. The active-site Nucleophile; for glutamine hydrolysis is Cys-381. Residues 382-385 (LGMQ), Glu-405, and Arg-462 contribute to the L-glutamine site. Active-site residues include His-507 and Glu-509.

Belongs to the CTP synthase family. In terms of assembly, homotetramer.

The enzyme catalyses UTP + L-glutamine + ATP + H2O = CTP + L-glutamate + ADP + phosphate + 2 H(+). It catalyses the reaction L-glutamine + H2O = L-glutamate + NH4(+). The catalysed reaction is UTP + NH4(+) + ATP = CTP + ADP + phosphate + 2 H(+). It functions in the pathway pyrimidine metabolism; CTP biosynthesis via de novo pathway; CTP from UDP: step 2/2. Allosterically activated by GTP, when glutamine is the substrate; GTP has no effect on the reaction when ammonia is the substrate. The allosteric effector GTP functions by stabilizing the protein conformation that binds the tetrahedral intermediate(s) formed during glutamine hydrolysis. Inhibited by the product CTP, via allosteric rather than competitive inhibition. Its function is as follows. Catalyzes the ATP-dependent amination of UTP to CTP with either L-glutamine or ammonia as the source of nitrogen. Regulates intracellular CTP levels through interactions with the four ribonucleotide triphosphates. The polypeptide is CTP synthase (Mesoplasma florum (strain ATCC 33453 / NBRC 100688 / NCTC 11704 / L1) (Acholeplasma florum)).